Reading from the N-terminus, the 917-residue chain is Nitrate reductase [NADH] 1 (917 aa).

Residues 62–81 (DSYDDSSSDDEDESHNRNVP) are disordered. The span at 63-74 (SYDDSSSDDEDE) shows a compositional bias: acidic residues. C197 provides a ligand contact to Mo-molybdopterin. Residues 545-620 (SKMYSISEVR…LEDYRIGELI (76 aa)) enclose the Cytochrome b5 heme-binding domain. Heme contacts are provided by H580 and H603. One can recognise an FAD-binding FR-type domain in the interval 660–772 (REKIPVRLIE…KGPLGHIEYK (113 aa)). Residues 712-715 (RAYT), 729-733 (VVKVY), F734, F741, 746-748 (LMS), and T799 contribute to the FAD site.

The protein belongs to the nitrate reductase family. Homodimer. Requires FAD as cofactor. It depends on heme as a cofactor. The cofactor is Mo-molybdopterin. As to expression, root, leaf, and shoot.

It carries out the reaction nitrite + NAD(+) + H2O = nitrate + NADH + H(+). Its function is as follows. Nitrate reductase is a key enzyme involved in the first step of nitrate assimilation in plants, fungi and bacteria. This Arabidopsis thaliana (Mouse-ear cress) protein is Nitrate reductase [NADH] 1 (NIA1).